The following is a 235-amino-acid chain: MRIDIITCLPKLLDSFFGHSILKRAQEKGIAEVVVHDLRTYTLFKHKQVDDYSYGGSAGMVLMVEPIDRCITALKAEREYDAVIYMTPDGKTFDQQTANRFSLYKNIIILCGHYKGVDERARQAFITHEISIGDYVLSGGELAAAVVSDALIRLIPGVLSDETSALTDSFQDSLLAPAVYTRPADYKGMIVPEILLSGNEKEIEKWRFENALERTKERRPDLYQKFTKAYDADGK.

S-adenosyl-L-methionine is bound by residues Gly-112 and 132-137 (IGDYVL).

Belongs to the RNA methyltransferase TrmD family. In terms of assembly, homodimer.

It is found in the cytoplasm. The catalysed reaction is guanosine(37) in tRNA + S-adenosyl-L-methionine = N(1)-methylguanosine(37) in tRNA + S-adenosyl-L-homocysteine + H(+). In terms of biological role, specifically methylates guanosine-37 in various tRNAs. The polypeptide is tRNA (guanine-N(1)-)-methyltransferase (Cytophaga hutchinsonii (strain ATCC 33406 / DSM 1761 / CIP 103989 / NBRC 15051 / NCIMB 9469 / D465)).